We begin with the raw amino-acid sequence, 305 residues long: Dihydroorotate dehydrogenase B (NAD(+)), catalytic subunit (305 aa).

FMN is bound by residues Ser23 and 47 to 48; that span reads KG. Residues Lys47 and 71-75 contribute to the substrate site; that span reads NAIGL. FMN contacts are provided by Asn101 and Asn129. Residue Asn129 participates in substrate binding. Cys132 functions as the Nucleophile in the catalytic mechanism. Lys167 and Ile193 together coordinate FMN. 194–195 serves as a coordination point for substrate; it reads NT. Residues Gly219, 245–246, and 267–268 contribute to the FMN site; these read GG and GT.

This sequence belongs to the dihydroorotate dehydrogenase family. Type 1 subfamily. In terms of assembly, heterotetramer of 2 PyrK and 2 PyrD type B subunits. The cofactor is FMN.

The protein localises to the cytoplasm. It carries out the reaction (S)-dihydroorotate + NAD(+) = orotate + NADH + H(+). The protein operates within pyrimidine metabolism; UMP biosynthesis via de novo pathway; orotate from (S)-dihydroorotate (NAD(+) route): step 1/1. In terms of biological role, catalyzes the conversion of dihydroorotate to orotate with NAD(+) as electron acceptor. This is Dihydroorotate dehydrogenase B (NAD(+)), catalytic subunit (pyrD) from Geotalea uraniireducens (strain Rf4) (Geobacter uraniireducens).